We begin with the raw amino-acid sequence, 118 residues long: Large ribosomal subunit protein bL20 (118 aa).

The protein belongs to the bacterial ribosomal protein bL20 family.

Functionally, binds directly to 23S ribosomal RNA and is necessary for the in vitro assembly process of the 50S ribosomal subunit. It is not involved in the protein synthesizing functions of that subunit. The chain is Large ribosomal subunit protein bL20 from Serratia proteamaculans (strain 568).